Reading from the N-terminus, the 1291-residue chain is Cytoplasmic FMR1-interacting protein (1291 aa).

Residues 1270 to 1291 (PSVISSSSHYQDPQKLRQSINN) form a disordered region. Positions 1271-1291 (SVISSSSHYQDPQKLRQSINN) are enriched in polar residues.

It belongs to the CYFIP family. Interacts with Fmr1 and Rac1. Component of the WAVE complex composed of Hem/Kette, Scar/Wave and Cyfip where it binds through its C-terminus directly to Hem. In the embryo, expressed mainly in the gut and in the developing central nervous system where high levels of expression are found in the CNS neuropile. Expression in the gut diminishes as development proceeds (at protein level). In the adult, expressed specifically in the nervous system.

The protein localises to the cytoplasm. Functionally, plays a role in guidance and morphology of central and peripheral axons and in synaptic morphology. Also required for formation of cell membrane protrusions and for bristle development. Plays a role in regulating mitochondrial activity, energy metabolism and membrane potential which maintains normal gamma-aminobutyric acid (GABA) signaling and ensures normal social behavior. In Drosophila melanogaster (Fruit fly), this protein is Cytoplasmic FMR1-interacting protein.